We begin with the raw amino-acid sequence, 230 residues long: Cytochrome c-552 (230 aa).

The signal sequence occupies residues 1-47; it reads MTTYLSQDRLRNKENDTMTYQHSKMYQSRTFLLFSALLLVAGQASAA. C63, C66, H67, C166, C169, and H170 together coordinate heme c.

Post-translationally, binds 2 heme c groups covalently per subunit.

The protein resides in the periplasm. Its function is as follows. Diheme, high potential cytochrome c. The sequence is that of Cytochrome c-552 (cyc1) from Acidithiobacillus ferridurans.